We begin with the raw amino-acid sequence, 369 residues long: MAYHSFLLEPITCHAWNKDATQIAFCPNSHDVHIYKKDGDKWSKIHELKEHNGHVTGIDWAPESNRIVTCGTDRNAYVWTLKNNVWKPTLVILRINRAARCVKWSPKENKFAVGSGSRLISICYFEQENDWWVCKHIKKPIRSTVLSLDWHPNNVLLAAGSSDFKSRIFSAYIKEVEERPAPTPWGSKMPFGELMFESSSSCGWVHSVCFSHSGDRMAWVSHDSTICISDATKKMRVTSLITDTLPLLCVTFITENSLVAAGHDCFPVLYIYDEAQGTLSFGGKLDIPKQSSQRGMTARERFQNLDKKASSDTNNITLDSLHKNSISQLSVLSGGKAKCSKFCTTGLDGGMCIWDVKSLESAMKDLKIK.

WD repeat units lie at residues 6–45, 50–89, 94–135, 140–179, 200–239, 242–282, and 321–364; these read FLLE…WSKI, EHNG…WKPT, RINR…WVCK, PIRS…VEER, SSCG…RVTS, TDTL…LSFG, and LHKN…SAMK.

It belongs to the WD repeat ARPC1 family. Component of the Arp2/3 complex composed of actr2/arp2, actr3/arp3, arpc1 (arpc1a or arpc1b), arpc2, arpc3, arpc4 and arpc5.

It is found in the cytoplasm. It localises to the cytoskeleton. The protein localises to the nucleus. In terms of biological role, component of the Arp2/3 complex, a multiprotein complex that mediates actin polymerization upon stimulation by nucleation-promoting factor (NPF). The Arp2/3 complex mediates the formation of branched actin networks in the cytoplasm, providing the force for cell motility. In addition to its role in the cytoplasmic cytoskeleton, the Arp2/3 complex also promotes actin polymerization in the nucleus, thereby regulating gene transcription and repair of damaged DNA. The Arp2/3 complex promotes homologous recombination (HR) repair in response to DNA damage by promoting nuclear actin polymerization, leading to drive motility of double-strand breaks (DSBs). The sequence is that of Actin-related protein 2/3 complex subunit 1B-A (arpc1b-a) from Xenopus laevis (African clawed frog).